Reading from the N-terminus, the 405-residue chain is MSTSIRICSYLLLPLIYLLVNVKIAQLGESFPITIVTFLPVLLLLFLERISVKKLMIALGIGAGLTAFNYLFGQSLDASKYVTSTMLFVYIVIIIGMVWSIRFKTISPHNHRKILRFFYLVVGLVVALAAVEMAQIILTGGSSIMESISKYLIYSNSYVLNFIKFGGKRTTALYFEPAFFALALISIWLSIKQFGIKTPKTDAMILAGIILSGSFSGVMTFILFYLLEWAFQYLNKEAIKKKLPLALISLAVFLVGVVIAFPYISTRLGDLGTEGSSSYYRIVGPLVMVGYSLTHIDGVVRFGSLYEYVASFGIFNGADVGKTIDNGLYLLIIYFSWFAVFLSLWYMGKVIKMMINAFGDNRNFRVQLYLFTPVSLFFTGSIFSPEYAFLIVCPFILRKALNITR.

The next 11 helical transmembrane spans lie at 5 to 25, 27 to 47, 55 to 75, 81 to 101, 117 to 137, 171 to 191, 204 to 224, 244 to 264, 282 to 302, 327 to 347, and 376 to 396; these read IRICSYLLLPLIYLLVNVKIA, LGESFPITIVTFLPVLLLLFL, LMIALGIGAGLTAFNYLFGQS, YVTSTMLFVYIVIIIGMVWSI, FFYLVVGLVVALAAVEMAQII, TALYFEPAFFALALISIWLSI, MILAGIILSGSFSGVMTFILF, PLALISLAVFLVGVVIAFPYI, IVGPLVMVGYSLTHIDGVVRF, GLYLLIIYFSWFAVFLSLWYM, and LFFTGSIFSPEYAFLIVCPFI.

The protein resides in the cell inner membrane. Its pathway is slime biogenesis; slime polysaccharide biosynthesis. The sequence is that of Putative colanic acid polymerase (wcaD) from Escherichia coli (strain K12).